Here is a 356-residue protein sequence, read N- to C-terminus: Vesicular integral-membrane protein VIP36 (356 aa).

The first 44 residues, 1–44 (MAAEGWIWRWGWGRRCLGRPGLPGPGPGPATPLFLLLLLGPVVA), serve as a signal peptide directing secretion. The Lumenal segment spans residues 45–322 (DITDGNSEHL…FRSGPLTGWR (278 aa)). Positions 52–276 (EHLKREHSLI…DIISMKLFQL (225 aa)) constitute an L-type lectin-like domain. S96 and D131 together coordinate a carbohydrate. Ca(2+) is bound by residues D162, Y164, and N166. 164 to 166 (YPN) is a binding site for a carbohydrate. The N-linked (GlcNAc...) asparagine glycan is linked to N183. H190 provides a ligand contact to a carbohydrate. D193 is a binding site for Ca(2+). C202 and C239 are oxidised to a cystine. A carbohydrate is bound at residue 260-262 (GDL). The chain crosses the membrane as a helical span at residues 323-345 (VFLLLLCALLGIIVCAVVGAVVF). At 346 to 356 (QKRQERNKRFY) the chain is on the cytoplasmic side.

In terms of assembly, monomer. Ca(2+) is required as a cofactor. As to expression, expressed in kidney, liver, intestine, lung, spleen and heart. Low expression in brain.

The protein localises to the golgi apparatus membrane. Functionally, plays a role as an intracellular lectin in the early secretory pathway. Interacts with N-acetyl-D-galactosamine and high-mannose type glycans and may also bind to O-linked glycans. Involved in the transport and sorting of glycoproteins carrying high mannose-type glycans. The sequence is that of Vesicular integral-membrane protein VIP36 (LMAN2) from Canis lupus familiaris (Dog).